The primary structure comprises 160 residues: uncharacterized protein (160 aa).

The N-acetyltransferase domain maps to 5–160 (ISLSFYKPEH…GEQLILHHFL (156 aa)).

This is an uncharacterized protein from Bacillus subtilis (strain 168).